We begin with the raw amino-acid sequence, 341 residues long: Uroporphyrinogen decarboxylase (341 aa).

Substrate-binding positions include 23–27 (RQAGR), Asp-73, Tyr-148, Ser-203, and His-318.

It belongs to the uroporphyrinogen decarboxylase family. In terms of assembly, homodimer.

It is found in the cytoplasm. The enzyme catalyses uroporphyrinogen III + 4 H(+) = coproporphyrinogen III + 4 CO2. It functions in the pathway porphyrin-containing compound metabolism; protoporphyrin-IX biosynthesis; coproporphyrinogen-III from 5-aminolevulinate: step 4/4. Functionally, catalyzes the decarboxylation of four acetate groups of uroporphyrinogen-III to yield coproporphyrinogen-III. The chain is Uroporphyrinogen decarboxylase from Brucella suis (strain ATCC 23445 / NCTC 10510).